The primary structure comprises 309 residues: Probable lipid kinase YegS-like (309 aa).

One can recognise a DAGKc domain in the interval 1-134 (MAPSHWRLIL…VDLLRIDADH (134 aa)). ATP is bound by residues threonine 39, 65–71 (GDGTLSE), and threonine 96. Residues leucine 219, aspartate 222, and leucine 224 each coordinate Mg(2+). Residue glutamate 280 is the Proton acceptor of the active site.

This sequence belongs to the diacylglycerol/lipid kinase family. YegS lipid kinase subfamily. It depends on Mg(2+) as a cofactor. Ca(2+) serves as cofactor.

The protein localises to the cytoplasm. Functionally, probably phosphorylates lipids; the in vivo substrate is unknown. This chain is Probable lipid kinase YegS-like, found in Xanthomonas axonopodis pv. citri (strain 306).